We begin with the raw amino-acid sequence, 267 residues long: Tryptophan synthase alpha chain (267 aa).

Catalysis depends on proton acceptor residues E44 and D55.

The protein belongs to the TrpA family. As to quaternary structure, tetramer of two alpha and two beta chains.

The enzyme catalyses (1S,2R)-1-C-(indol-3-yl)glycerol 3-phosphate + L-serine = D-glyceraldehyde 3-phosphate + L-tryptophan + H2O. It functions in the pathway amino-acid biosynthesis; L-tryptophan biosynthesis; L-tryptophan from chorismate: step 5/5. Its function is as follows. The alpha subunit is responsible for the aldol cleavage of indoleglycerol phosphate to indole and glyceraldehyde 3-phosphate. In Coxiella burnetii (strain Dugway 5J108-111), this protein is Tryptophan synthase alpha chain.